A 392-amino-acid chain; its full sequence is Selenide, water dikinase 1 (392 aa).

Cys-31 is an active-site residue. ATP contacts are provided by residues Lys-32, Gly-67 to Asp-69, Asp-87, Asp-110, and Gly-161 to Thr-164. Asp-69 is a Mg(2+) binding site. Asp-110 serves as a coordination point for Mg(2+). Residue Asp-265 coordinates Mg(2+). Position 387 is a phosphothreonine (Thr-387).

Belongs to the selenophosphate synthase 1 family. Class II subfamily. In terms of assembly, homodimer. It depends on Mg(2+) as a cofactor.

It localises to the cell membrane. The protein resides in the nucleus membrane. It catalyses the reaction hydrogenselenide + ATP + H2O = selenophosphate + AMP + phosphate + 2 H(+). Synthesizes selenophosphate from selenide and ATP. This chain is Selenide, water dikinase 1 (sephs1), found in Danio rerio (Zebrafish).